The following is a 344-amino-acid chain: MIDFVKSRDTVIQKSFFEEFNSQNREMGSFAYSGNSESVWTGENITSIWKTILINETGSYCVAARPMTMDGAEFNLDLMGYSVSEDQINNDEIGIWNYISVAEMGGVLLFLSYWIWTCLHFSKIIFPAQKVICLYIFLFALNQTLQECIEEYVFSSECIKYRQFYSVYEIIDFLRTNFYRLFVIYCALGFGITRTVPKYLMIKGISIVIALCSVYWISLYKDVYVVSEIFDMIQYEVFPAIWVYSICHLLKQCTSVTTYENASKARFFRRMLNAFIFIFCASPMLHYLSNIIFGNFDYRLSVIIGDLFTFMEKIAFPCYIMFPTHNEALAYNRNVAEEAQEKMI.

Residues 1 to 98 are Cytoplasmic-facing; that stretch reads MIDFVKSRDT…NNDEIGIWNY (98 aa). Residues 99–119 form a helical membrane-spanning segment; it reads ISVAEMGGVLLFLSYWIWTCL. Position 120 (histidine 120) is a topological domain, lumenal. A helical membrane pass occupies residues 121-141; sequence FSKIIFPAQKVICLYIFLFAL. The Cytoplasmic segment spans residues 142-169; that stretch reads NQTLQECIEEYVFSSECIKYRQFYSVYE. A helical membrane pass occupies residues 170–192; it reads IIDFLRTNFYRLFVIYCALGFGI. The Lumenal portion of the chain corresponds to 193–198; the sequence is TRTVPK. Residues 199 to 219 form a helical membrane-spanning segment; that stretch reads YLMIKGISIVIALCSVYWISL. Residues 220-222 lie on the Cytoplasmic side of the membrane; sequence YKD. A helical membrane pass occupies residues 223-243; the sequence is VYVVSEIFDMIQYEVFPAIWV. Residues 244-273 lie on the Lumenal side of the membrane; that stretch reads YSICHLLKQCTSVTTYENASKARFFRRMLN. A helical membrane pass occupies residues 274–294; sequence AFIFIFCASPMLHYLSNIIFG. Topologically, residues 295 to 344 are cytoplasmic; the sequence is NFDYRLSVIIGDLFTFMEKIAFPCYIMFPTHNEALAYNRNVAEEAQEKMI.

Its subcellular location is the endoplasmic reticulum membrane. This is an uncharacterized protein from Schizosaccharomyces pombe (strain 972 / ATCC 24843) (Fission yeast).